The primary structure comprises 225 residues: Protein LiaH (225 aa).

2 coiled-coil regions span residues 58-151 (KKYE…KEHM) and 161-182 (ESAYREFLRIENRIEEMEIRAN).

The protein belongs to the PspA/Vipp/IM30 family.

In Bacillus subtilis (strain 168), this protein is Protein LiaH (liaH).